Consider the following 581-residue polypeptide: UvrABC system protein C (581 aa).

A GIY-YIG domain is found at 15–94 (REPGVYLFEQ…IKRHRPPYNV (80 aa)). Residues 202-237 (GVLADPLRREMEAAAQNQEFERAANLRDKLGAVEAL) form the UVR domain.

This sequence belongs to the UvrC family. Interacts with UvrB in an incision complex.

It localises to the cytoplasm. Functionally, the UvrABC repair system catalyzes the recognition and processing of DNA lesions. UvrC both incises the 5' and 3' sides of the lesion. The N-terminal half is responsible for the 3' incision and the C-terminal half is responsible for the 5' incision. The sequence is that of UvrABC system protein C from Haloarcula marismortui (strain ATCC 43049 / DSM 3752 / JCM 8966 / VKM B-1809) (Halobacterium marismortui).